The sequence spans 215 residues: Proteasome subunit beta (215 aa).

A propeptide spans 1-12 (MLGEIQDKVYKG) (removed in mature form; by autocatalysis). The active-site Nucleophile is the threonine 13.

It belongs to the peptidase T1B family. The 20S proteasome core is composed of 14 alpha and 14 beta subunits that assemble into four stacked heptameric rings, resulting in a barrel-shaped structure. The two inner rings, each composed of seven catalytic beta subunits, are sandwiched by two outer rings, each composed of seven alpha subunits. The catalytic chamber with the active sites is on the inside of the barrel. Has a gated structure, the ends of the cylinder being occluded by the N-termini of the alpha-subunits. Is capped at one or both ends by the proteasome regulatory ATPase, PAN.

The protein localises to the cytoplasm. It catalyses the reaction Cleavage of peptide bonds with very broad specificity.. The formation of the proteasomal ATPase PAN-20S proteasome complex, via the docking of the C-termini of PAN into the intersubunit pockets in the alpha-rings, triggers opening of the gate for substrate entry. Interconversion between the open-gate and close-gate conformations leads to a dynamic regulation of the 20S proteasome proteolysis activity. Functionally, component of the proteasome core, a large protease complex with broad specificity involved in protein degradation. The chain is Proteasome subunit beta from Archaeoglobus profundus (strain DSM 5631 / JCM 9629 / NBRC 100127 / Av18).